The sequence spans 98 residues: DNA-binding protein Fis (98 aa).

A DNA-binding region (H-T-H motif) is located at residues 74–93 (QTRAALMMGINRGTLRKKLK).

This sequence belongs to the transcriptional regulatory Fis family. Homodimer.

In terms of biological role, activates ribosomal RNA transcription. Plays a direct role in upstream activation of rRNA promoters. The polypeptide is DNA-binding protein Fis (Yersinia enterocolitica serotype O:8 / biotype 1B (strain NCTC 13174 / 8081)).